Here is a 29-residue protein sequence, read N- to C-terminus: Cysteine-rich venom protein 25-A (29 aa).

It belongs to the CRISP family. Post-translationally, contains 8 disulfide bonds. Expressed by the venom gland.

It is found in the secreted. This is Cysteine-rich venom protein 25-A from Naja haje haje (Egyptian cobra).